Reading from the N-terminus, the 81-residue chain is Arminin 2a (81 aa).

An N-terminal signal peptide occupies residues 1 to 18 (MKTVFAILFLAFIALTYA). The propeptide occupies 19-57 (RSYEDVKEEIKNEVVKEILEDLEEESDELDDKSKEINDA). Ala-78 is subject to Alanine amide.

The protein belongs to the arminin family. As to expression, expressed in entodermal epithelium along the body column.

It localises to the secreted. The protein localises to the target cell membrane. Functionally, antimicrobial peptide with a broad-spectrum antimicrobial activity. Keeps its antibacterial activity under a wide range of salt concentrations that mimic physiological conditions of human blood, which is surprising, since Hydra is an obligate freshwater animal with nearly no salt tolerance. Does not affect red blood cells. In Hydra vulgaris (Hydra), this protein is Arminin 2a.